Reading from the N-terminus, the 929-residue chain is uncharacterized protein (929 aa).

The tract at residues 1-257 is disordered; it reads MARKGKVNTL…SVLSSDDNDS (257 aa). A compositionally biased stretch (basic and acidic residues) spans 23–34; that stretch reads KQLENKILHSYE. Composition is skewed to acidic residues over residues 35 to 50, 59 to 75, 107 to 117, 133 to 144, and 188 to 220; these read EESAGFDSEELEDNDE, SEDDEEIDSDEAFDEED, LNEEDDSDDSV, DENELVDLDTLL, and SESELTDSADNMNESDSESEIESSDSDHDDGEN. Residues Ser251, Ser555, and Ser557 each carry the phosphoserine modification. The tract at residues 602-729 is disordered; it reads DEMQAFEDEL…KADKKNHKLK (128 aa). Positions 605 to 619 are enriched in acidic residues; that stretch reads QAFEDELAGVPNEDD. Residues 670 to 681 show a composition bias toward basic and acidic residues; that stretch reads NKPEMKEGQKKA. The span at 696–711 shows a compositional bias: polar residues; that stretch reads ETNPWLQVPDQRTSSA. Positions 712–729 are enriched in basic and acidic residues; it reads KKLDKNSSKADKKNHKLK. Ser758, Ser760, and Ser764 each carry phosphoserine. Positions 805–820 are enriched in basic and acidic residues; that stretch reads KEDWVQEDAPKEEDHS. The interval 805 to 843 is disordered; it reads KEDWVQEDAPKEEDHSLPGWGSWGGVGVKQRKTKPKVKK. Residues 833 to 843 show a composition bias toward basic residues; that stretch reads KQRKTKPKVKK.

This sequence to yeast YML093w.

It is found in the nucleus. It localises to the nucleolus. This is an uncharacterized protein from Schizosaccharomyces pombe (strain 972 / ATCC 24843) (Fission yeast).